Reading from the N-terminus, the 423-residue chain is Adenylosuccinate synthetase (423 aa).

Residues 11 to 17 (GDEGKGK) and 39 to 41 (GHT) each bind GTP. The Proton acceptor role is filled by Asp12. Residues Asp12 and Gly39 each coordinate Mg(2+). Residues 12–15 (DEGK), 37–40 (NAGH), Thr127, Arg141, Gln223, Thr238, and Arg302 contribute to the IMP site. The active-site Proton donor is the His40. 298–304 (TTTGRSR) provides a ligand contact to substrate. GTP-binding positions include Arg304, 330-332 (KLD), and 412-414 (SVG).

The protein belongs to the adenylosuccinate synthetase family. Homodimer. Mg(2+) is required as a cofactor.

The protein resides in the cytoplasm. The catalysed reaction is IMP + L-aspartate + GTP = N(6)-(1,2-dicarboxyethyl)-AMP + GDP + phosphate + 2 H(+). It participates in purine metabolism; AMP biosynthesis via de novo pathway; AMP from IMP: step 1/2. In terms of biological role, plays an important role in the de novo pathway of purine nucleotide biosynthesis. Catalyzes the first committed step in the biosynthesis of AMP from IMP. The protein is Adenylosuccinate synthetase of Methanococcoides burtonii (strain DSM 6242 / NBRC 107633 / OCM 468 / ACE-M).